We begin with the raw amino-acid sequence, 126 residues long: Small ribosomal subunit protein uS13 (126 aa).

A disordered region spans residues 92-126 (HRMGLPVRGQRTRTNARTRRGRRQTVAGKKKAPGK). Residues 101–126 (QRTRTNARTRRGRRQTVAGKKKAPGK) are compositionally biased toward basic residues.

Belongs to the universal ribosomal protein uS13 family. In terms of assembly, part of the 30S ribosomal subunit. Forms a loose heterodimer with protein S19. Forms two bridges to the 50S subunit in the 70S ribosome.

Its function is as follows. Located at the top of the head of the 30S subunit, it contacts several helices of the 16S rRNA. In the 70S ribosome it contacts the 23S rRNA (bridge B1a) and protein L5 of the 50S subunit (bridge B1b), connecting the 2 subunits; these bridges are implicated in subunit movement. Contacts the tRNAs in the A and P-sites. The polypeptide is Small ribosomal subunit protein uS13 (Nostoc punctiforme (strain ATCC 29133 / PCC 73102)).